The primary structure comprises 209 residues: Thymidylate kinase (209 aa).

10–17 is a binding site for ATP; that stretch reads GLDGAGKS.

Belongs to the thymidylate kinase family.

It catalyses the reaction dTMP + ATP = dTDP + ADP. Phosphorylation of dTMP to form dTDP in both de novo and salvage pathways of dTTP synthesis. The chain is Thymidylate kinase from Francisella tularensis subsp. holarctica (strain OSU18).